A 26-amino-acid polypeptide reads, in one-letter code: Glycyl-poneratoxin (26 aa).

Arg25 is modified (arginine amide; in delta-paraponeritoxin-Pc1a).

In terms of processing, the glycine-PoTx is a non-amidated form of poneratoxin, with an extra-Gly at C-terminus. This loss of amidation does not alter toxin activity on Nav1.7/SCN9A. In terms of tissue distribution, expressed by the venom gland.

The protein resides in the secreted. Toxin that causes pain in vertebrates by targeting tetrodotoxin (TTX)-sensitive sodium channels in peripheral sensory neurons. Also blocks synaptic transmission and stimulates smooth muscle contraction. Converts the normally rapidly activating and inactivating sodium channel current into one that does not inactivate. Is active on both Nav1.6/SCN8A and Nav1.7/SCN9A sodium channels, with a much potent activity on Nav1.6/SCN8A (EC(50)=97 nM on human channels) than on Nav1.7/SCN9A (EC(50)=2.3 uM on human and EC(50)=1.8 uM on mouse channels). On these channels, causes a sustained current, a reduction in peak current amplitude and a hyperpolarising shift. Modulates Nav1.7/SCN9A in a non-competitive manner with TTX or tetracaine. Toxin-induced persistant current is very slowly reversible with repeated wash steps over 30 minutes. In vivo, shallow intraplantar injection in mice causes immediate, long-lasting and near-maximal nocifensive behaviors, which decrease with coinjection of TTX. When tested on insects, causes paralysis but not mortality at high doses. The sequence is that of Glycyl-poneratoxin from Paraponera clavata (Bullet ant).